Consider the following 782-residue polypeptide: Homeotic protein proboscipedia (782 aa).

Disordered stretches follow at residues 1 to 23 (MQEV…ESPL), 153 to 195 (PQTP…VPEN), 251 to 336 (MKHK…GISS), 358 to 380 (SSVS…KDDG), 439 to 493 (IATP…QQQP), and 547 to 586 (YYNY…ADFE). An Antp-type hexapeptide motif is present at residues 164–169 (EYPWMK). Residues 198–257 (PRRLRTAYTNTQLLELEKEFHFNKYLCRPRRIEIAASLDLTERQVKVWFQNRRMKHKRQT) constitute a DNA-binding region (homeobox). Low complexity predominate over residues 308 to 321 (NNNTPSATNNNPSA). The segment covering 322-336 (GNLTPNSSLETGISS) has biased composition (polar residues). Gly residues predominate over residues 452-463 (NGSGGGPAGGYF). Residues 464-493 (PGYYPSPKQQQQVQQQQLHPQQQQLPQQQP) show a composition bias toward low complexity. A compositionally biased stretch (basic residues) spans 563–580 (QQHHHHAQHHQQQQHHQN).

This sequence belongs to the Antp homeobox family. Proboscipedia subfamily.

The protein resides in the nucleus. Its function is as follows. Sequence-specific transcription factor which is part of a developmental regulatory system that provides cells with specific positional identities on the anterior-posterior axis. Controls development of mouthparts, and labial and maxillary palps. This chain is Homeotic protein proboscipedia (pb), found in Drosophila melanogaster (Fruit fly).